The primary structure comprises 331 residues: UDP-GalNAc:beta-1,3-N-acetylgalactosaminyltransferase 1 (331 aa).

The Cytoplasmic segment spans residues methionine 1–tryptophan 20. The chain crosses the membrane as a helical; Signal-anchor for type II membrane protein span at residues serine 21–valine 43. Topologically, residues isoleucine 44 to tyrosine 331 are lumenal. Residues asparagine 72, asparagine 154, asparagine 198, asparagine 212, and asparagine 326 are each glycosylated (N-linked (GlcNAc...) asparagine).

The protein belongs to the glycosyltransferase 31 family. Mg(2+) is required as a cofactor.

The protein localises to the golgi apparatus membrane. It catalyses the reaction a globoside Gb3Cer (d18:1(4E)) + UDP-N-acetyl-alpha-D-galactosamine = a globoside Gb4Cer (d18:1(4E)) + UDP + H(+). The protein operates within protein modification; protein glycosylation. Functionally, transfers N-acetylgalactosamine onto globotriaosylceramide. Plays a critical role in preimplantation stage embryonic development. The chain is UDP-GalNAc:beta-1,3-N-acetylgalactosaminyltransferase 1 (B3GALNT1) from Sus scrofa (Pig).